A 375-amino-acid polypeptide reads, in one-letter code: Chaperone protein DnaJ (375 aa).

Residues 6–71 enclose the J domain; that stretch reads DYYEILGVSR…DKRARYDQYG (66 aa). The segment at 132-214 adopts a CR-type zinc-finger fold; the sequence is GTTKKITIPR…CQGSGKVRKQ (83 aa). Cys145, Cys148, Cys162, Cys165, Cys188, Cys191, Cys202, and Cys205 together coordinate Zn(2+). CXXCXGXG motif repeat units lie at residues 145 to 152, 162 to 169, 188 to 195, and 202 to 209; these read CDTCNGTG, CPQCNGSG, CDRCGGRG, and CPTCQGSG. Residues 222–243 form a disordered region; sequence PPGVDTGTRLRMPNEGEAGDKG.

Belongs to the DnaJ family. In terms of assembly, homodimer. Zn(2+) serves as cofactor.

The protein resides in the cytoplasm. Its function is as follows. Participates actively in the response to hyperosmotic and heat shock by preventing the aggregation of stress-denatured proteins and by disaggregating proteins, also in an autonomous, DnaK-independent fashion. Unfolded proteins bind initially to DnaJ; upon interaction with the DnaJ-bound protein, DnaK hydrolyzes its bound ATP, resulting in the formation of a stable complex. GrpE releases ADP from DnaK; ATP binding to DnaK triggers the release of the substrate protein, thus completing the reaction cycle. Several rounds of ATP-dependent interactions between DnaJ, DnaK and GrpE are required for fully efficient folding. Also involved, together with DnaK and GrpE, in the DNA replication of plasmids through activation of initiation proteins. The chain is Chaperone protein DnaJ from Halothermothrix orenii (strain H 168 / OCM 544 / DSM 9562).